The primary structure comprises 178 residues: Fibroin heavy chain (178 aa).

The N-terminal stretch at 1 to 21 (MRVKTFVILCCALQYVAYTNA) is a signal peptide. The segment at 149–178 (AVGAGAGAGAAAGSGAGAGAGYGAASGAGA) is highly repetitive.

Silk fibroin elementary unit consists in a disulfide-linked heavy and light chain and a p25 glycoprotein in molar ratios of 6:6:1. This results in a complex of approximately 2.3 MDa. Post-translationally, the interchain disulfide bridge is essential for the intracellular transport and secretion of fibroin. Produced exclusively in the posterior (PSG) section of silk glands, which are essentially modified salivary glands.

Core component of the silk filament; a strong, insoluble and chemically inert fiber. The protein is Fibroin heavy chain (FIBH) of Bombyx mandarina (Wild silk moth).